A 398-amino-acid polypeptide reads, in one-letter code: tRNA pseudouridine synthase D (398 aa).

Asp76 serves as the catalytic Nucleophile. The 211-residue stretch at Gly151–Val361 folds into the TRUD domain.

Belongs to the pseudouridine synthase TruD family.

It carries out the reaction uridine(13) in tRNA = pseudouridine(13) in tRNA. Functionally, responsible for synthesis of pseudouridine from uracil-13 in transfer RNAs. The protein is tRNA pseudouridine synthase D of Geobacter sp. (strain M21).